The chain runs to 379 residues: Protein OSCP1 (379 aa).

In terms of tissue distribution, predominantly expressed in testis.

Its subcellular location is the basal cell membrane. Functionally, may be involved in drug clearance in the placenta. The polypeptide is Protein OSCP1 (Oscp1) (Mus musculus (Mouse)).